The chain runs to 92 residues: Small ribosomal subunit protein uS19 (92 aa).

The protein belongs to the universal ribosomal protein uS19 family.

In terms of biological role, protein S19 forms a complex with S13 that binds strongly to the 16S ribosomal RNA. In Halalkalibacterium halodurans (strain ATCC BAA-125 / DSM 18197 / FERM 7344 / JCM 9153 / C-125) (Bacillus halodurans), this protein is Small ribosomal subunit protein uS19 (rpsS).